The following is a 133-amino-acid chain: Large ribosomal subunit protein uL16c (133 aa).

It belongs to the universal ribosomal protein uL16 family. In terms of assembly, part of the 50S ribosomal subunit.

The protein localises to the plastid. The sequence is that of Large ribosomal subunit protein uL16c from Euglena longa (Euglenophycean alga).